The primary structure comprises 397 residues: Phosphoglycerate transport regulatory protein PgtC (397 aa).

The first 24 residues, 1 to 24 (MFGSCQAYSRELVMATTFSPSATA), serve as a signal peptide directing secretion. Residues 102-117 (TSVAVAVSGFGLLINR) traverse the membrane as a helical segment.

It localises to the cell membrane. Required for pgtP expression, it may act jointly with the PgtA/PgtB signaling proteins. This chain is Phosphoglycerate transport regulatory protein PgtC (pgtC), found in Salmonella typhi.